Reading from the N-terminus, the 293-residue chain is 4-hydroxy-tetrahydrodipicolinate synthase (293 aa).

Threonine 47 contributes to the pyruvate binding site. Tyrosine 136 acts as the Proton donor/acceptor in catalysis. Catalysis depends on lysine 164, which acts as the Schiff-base intermediate with substrate. Isoleucine 206 serves as a coordination point for pyruvate.

The protein belongs to the DapA family. As to quaternary structure, homotetramer; dimer of dimers.

The protein localises to the cytoplasm. The enzyme catalyses L-aspartate 4-semialdehyde + pyruvate = (2S,4S)-4-hydroxy-2,3,4,5-tetrahydrodipicolinate + H2O + H(+). It participates in amino-acid biosynthesis; L-lysine biosynthesis via DAP pathway; (S)-tetrahydrodipicolinate from L-aspartate: step 3/4. Catalyzes the condensation of (S)-aspartate-beta-semialdehyde [(S)-ASA] and pyruvate to 4-hydroxy-tetrahydrodipicolinate (HTPA). This chain is 4-hydroxy-tetrahydrodipicolinate synthase, found in Listeria monocytogenes serotype 4a (strain HCC23).